The primary structure comprises 48 residues: Large ribosomal subunit protein eL40 (48 aa).

The protein belongs to the eukaryotic ribosomal protein eL40 family.

This chain is Large ribosomal subunit protein eL40, found in Methanobrevibacter smithii (strain ATCC 35061 / DSM 861 / OCM 144 / PS).